The chain runs to 491 residues: E3 ubiquitin-protein ligase Mdm2 (491 aa).

Residues 1–101 (MCNTNMSVPT…SVKEHRKIYT (101 aa)) are sufficient to promote the mitochondrial pathway of apoptosis. The segment at 1–110 (MCNTNMSVPT…TMIYRNLVVV (110 aa)) is necessary for interaction with USP2. The SWIB/MDM2 domain occupies 26-109 (TLVRPKPLLL…YTMIYRNLVV (84 aa)). Positions 141–187 (ELQEEKPSSSHLVSRPSTSSRRRAISETEENSDELSGERQRKRHKSD) are disordered. Over residues 149 to 159 (SSHLVSRPSTS) the composition is skewed to polar residues. Positions 150 to 230 (SHLVSRPSTS…NPDLDAGVSE (81 aa)) are interaction with PYHIN1 and necessary for interaction with RFFL and RNF34. Ser166 carries the phosphoserine; by SGK1 modification. Positions 170 to 306 (ENSDELSGER…ISLADYWKCT (137 aa)) are interaction with MTBP. The Nuclear localization signal motif lies at 179-185 (RQRKRHK). The residue at position 190 (Ser190) is a Phosphoserine. Positions 190 to 202 (SLSFDESLALCVI) match the Nuclear export signal motif. The tract at residues 210-304 (SSSSESTGTP…PEISLADYWK (95 aa)) is ARF-binding. Residues 211–237 (SSSESTGTPSNPDLDAGVSEHSGDWLD) are disordered. The tract at residues 223-232 (DLDAGVSEHS) is interaction with USP7. Ser240, Ser242, Ser246, Ser260, and Ser262 each carry phosphoserine. The tract at residues 242–331 (SDQFSVEFEV…CWALRENWLP (90 aa)) is region II. A disordered region spans residues 253–274 (SLDSEDYSLSEEGQELSDEDDE). Residues 276 to 491 (YQVTVYQAGE…IQMIVLTYFP (216 aa)) are necessary for interaction with USP2. The RanBP2-type zinc finger occupies 299–328 (LADYWKCTSCNEMNPPLPSHCNRCWALREN). Residues Cys305, Cys308, Cys319, and Cys322 each coordinate Zn(2+). The disordered stretch occupies residues 371–427 (RESCVEENDDKITQASQSQESEDYSQPSTSSSIIYSSQEDVKEFEREETQDKEESVE). 3 positions are modified to phosphoserine; by ATM: Ser386, Ser395, and Ser407. The span at 394–408 (YSQPSTSSSIIYSSQ) shows a compositional bias: low complexity. The span at 409–425 (EDVKEFEREETQDKEES) shows a compositional bias: basic and acidic residues. Phosphothreonine; by ATM is present on Thr419. Ser425 and Ser429 each carry phosphoserine; by ATM. An RING-type zinc finger spans residues 438-479 (CVICQGRPKNGCIVHGKTGHLMACFTCAKKLKKRNKPCPVCR). Residues 466–473 (KKLKKRNK) carry the Nucleolar localization signal motif.

It belongs to the MDM2/MDM4 family. In terms of assembly, interacts with p53/TP53, TP73/p73, RBL5 and RP11. Binds specifically to RNA. Can interact with RB1, E1A-associated protein EP300 and the E2F1 transcription factor. Forms a ternary complex with p53/TP53 and WWOX. Interacts with CDKN2AIP, RFWD3, USP7, PYHIN1, and RBBP6. Interacts with ARRB1 and ARRB2. Interacts with PSMA3. Found in a trimeric complex with MDM2, MDM4 and USP2. Interacts with USP2 (via N-terminus and C-terminus). Interacts with MDM4. Part of a complex with MDM2, DAXX, RASSF1 and USP7. Part of a complex with DAXX, MDM2 and USP7. Interacts directly with DAXX and USP7. Interacts (via C-terminus) with RASSF1 isoform A (via N-terminus); the interaction is independent of TP53. Interacts with APEX1; leading to its ubiquitination and degradation. Interacts with RYBP; this inhibits ubiquitination of TP53. Identified in a complex with RYBP and p53/TP53. Also a component of the TRIM28/KAP1-MDM2-p53/TP53 complex involved in regulating p53/TP53 stabilization and activity. Binds directly both p53/TP53 and TRIM28. Component of the TRIM28/KAP1-ERBB4-MDM2 complex involved in connecting growth factor responses with DNA damage. Interacts directly with both TRIM28 and ERBB4 in the complex. Interacts with DYRK2. Interacts with IGF1R. Interacts with TRIM13; the interaction ubiquitinates MDM2 leading to its proteasomal degradation. Interacts with SNAI1; this interaction promotes SNAI1 ubiquitination. Interacts with NOTCH1 (via intracellular domain). Interacts with FHIT. Interacts with RFFL and RNF34; the interaction stabilizes MDM2. Interacts with CDK5RAP3 and CDKN2A/ARF; form a ternary complex involved in regulation of p53/TP53. Interacts with MTA1. Interacts with AARB2. Interacts with MTBP. Interacts with PML. Interacts with TBRG1. Interacts (via its RanBP2-type zinc finger domain) with RPL11 in the 5S RNP complex composed of 5S RNA, RPL5 and RPL11; this interaction occurs in the nucleoplasm and negatively regulates MDM2-mediated TP53 ubiquitination and degradation. Interacts with ADGRB1; the interaction results in inhibition of MDM2-mediated ubiquitination and degradation of DLG4/PSD95, promoting DLG4 stability and regulating synaptic plasticity. Interacts with RPL23A; this interaction may promote p53/TP53 polyubiquitination. Interacts with NDUFS1. Interacts with MORN3; the interaction enhances the ubiquitination of p53/TP53. (Microbial infection) Interacts with herpes virus 8 protein v-IRF4. As to quaternary structure, (Microbial infection) Interacts with and ubiquitinates HIV-1 Tat. Phosphorylation on Ser-166 by SGK1 activates ubiquitination of p53/TP53. Phosphorylated at multiple sites near the RING domain by ATM upon DNA damage; this promotes its ubiquitination and degradation, preventing p53/TP53 degradation. Post-translationally, autoubiquitination leads to proteasomal degradation; resulting in p53/TP53 activation it may be regulated by SFN. Also ubiquitinated by TRIM13. ATM-phosphorylated MDM2 is ubiquitinated by the SCF(FBXO31) complex in response to genotoxic stress, promoting its degradation and p53/TP53-mediated DNA damage response. Deubiquitinated by USP2 leads to its accumulation and increases deubiquitination and degradation of p53/TP53. Deubiquitinated by USP7 leading to its stabilization. In terms of tissue distribution, ubiquitous. Isoform Mdm2-A, isoform Mdm2-B, isoform Mdm2-C, isoform Mdm2-D, isoform Mdm2-E, isoform Mdm2-F and isoform Mdm2-G are observed in a range of cancers but absent in normal tissues.

It localises to the nucleus. The protein localises to the nucleoplasm. The protein resides in the cytoplasm. Its subcellular location is the nucleolus. The enzyme catalyses S-ubiquitinyl-[E2 ubiquitin-conjugating enzyme]-L-cysteine + [acceptor protein]-L-lysine = [E2 ubiquitin-conjugating enzyme]-L-cysteine + N(6)-ubiquitinyl-[acceptor protein]-L-lysine.. Functionally, E3 ubiquitin-protein ligase that mediates ubiquitination of p53/TP53, leading to its degradation by the proteasome. Inhibits p53/TP53- and p73/TP73-mediated cell cycle arrest and apoptosis by binding its transcriptional activation domain. Also acts as a ubiquitin ligase E3 toward itself and ARRB1. Permits the nuclear export of p53/TP53. Promotes proteasome-dependent ubiquitin-independent degradation of retinoblastoma RB1 protein. Inhibits DAXX-mediated apoptosis by inducing its ubiquitination and degradation. Component of the TRIM28/KAP1-MDM2-p53/TP53 complex involved in stabilizing p53/TP53. Also a component of the TRIM28/KAP1-ERBB4-MDM2 complex which links growth factor and DNA damage response pathways. Mediates ubiquitination and subsequent proteasome degradation of DYRK2 in nucleus. Ubiquitinates IGF1R and SNAI1 and promotes them to proteasomal degradation. Ubiquitinates DCX, leading to DCX degradation and reduction of the dendritic spine density of olfactory bulb granule cells. Ubiquitinates DLG4, leading to proteasomal degradation of DLG4 which is required for AMPA receptor endocytosis. Negatively regulates NDUFS1, leading to decreased mitochondrial respiration, marked oxidative stress, and commitment to the mitochondrial pathway of apoptosis. Binds NDUFS1 leading to its cytosolic retention rather than mitochondrial localization resulting in decreased supercomplex assembly (interactions between complex I and complex III), decreased complex I activity, ROS production, and apoptosis. The polypeptide is E3 ubiquitin-protein ligase Mdm2 (MDM2) (Homo sapiens (Human)).